The sequence spans 237 residues: Uridylate kinase (237 aa).

12–15 contributes to the ATP binding site; it reads KLSG. The tract at residues 20–25 is involved in allosteric activation by GTP; that stretch reads GEDGLG. UMP is bound at residue glycine 54. Positions 55 and 59 each coordinate ATP. Residues aspartate 74 and 135–142 contribute to the UMP site; that span reads TGNPFFTT. 3 residues coordinate ATP: threonine 162, tyrosine 168, and aspartate 171.

It belongs to the UMP kinase family. As to quaternary structure, homohexamer.

It localises to the cytoplasm. The enzyme catalyses UMP + ATP = UDP + ADP. The protein operates within pyrimidine metabolism; CTP biosynthesis via de novo pathway; UDP from UMP (UMPK route): step 1/1. With respect to regulation, allosterically activated by GTP. Inhibited by UTP. Functionally, catalyzes the reversible phosphorylation of UMP to UDP. This chain is Uridylate kinase (pyrH), found in Haemophilus influenzae (strain ATCC 51907 / DSM 11121 / KW20 / Rd).